The sequence spans 51 residues: Insulin (51 aa).

Intrachain disulfides connect cysteine 7–cysteine 37, cysteine 19–cysteine 50, and cysteine 36–cysteine 41.

Belongs to the insulin family. Heterodimer of a B chain and an A chain linked by two disulfide bonds.

It is found in the secreted. Its function is as follows. Insulin decreases blood glucose concentration. It increases cell permeability to monosaccharides, amino acids and fatty acids. It accelerates glycolysis, the pentose phosphate cycle, and glycogen synthesis in liver. The sequence is that of Insulin (INS) from Saimiri sciureus (Common squirrel monkey).